The following is a 573-amino-acid chain: 2-succinyl-5-enolpyruvyl-6-hydroxy-3-cyclohexene-1-carboxylate synthase (573 aa).

This sequence belongs to the TPP enzyme family. MenD subfamily. Homodimer. The cofactor is Mg(2+). Mn(2+) serves as cofactor. Requires thiamine diphosphate as cofactor.

It catalyses the reaction isochorismate + 2-oxoglutarate + H(+) = 5-enolpyruvoyl-6-hydroxy-2-succinyl-cyclohex-3-ene-1-carboxylate + CO2. Its pathway is quinol/quinone metabolism; 1,4-dihydroxy-2-naphthoate biosynthesis; 1,4-dihydroxy-2-naphthoate from chorismate: step 2/7. It participates in quinol/quinone metabolism; menaquinone biosynthesis. Functionally, catalyzes the thiamine diphosphate-dependent decarboxylation of 2-oxoglutarate and the subsequent addition of the resulting succinic semialdehyde-thiamine pyrophosphate anion to isochorismate to yield 2-succinyl-5-enolpyruvyl-6-hydroxy-3-cyclohexene-1-carboxylate (SEPHCHC). The chain is 2-succinyl-5-enolpyruvyl-6-hydroxy-3-cyclohexene-1-carboxylate synthase from Shewanella putrefaciens (strain CN-32 / ATCC BAA-453).